Consider the following 1413-residue polypeptide: Sushi, nidogen and EGF-like domain-containing protein 1 (1413 aa).

The first 24 residues, 1–24, serve as a signal peptide directing secretion; the sequence is MRHGVAWALLVAAALGLGARGVRG. The NIDO domain maps to 103–258; the sequence is AFWADVDNRR…GRWAFRIDDA (156 aa). N-linked (GlcNAc...) asparagine glycans are attached at residues Asn145 and Asn204. EGF-like domains lie at 268 to 309, 311 to 347, and 349 to 385; these read TTSV…RRCH, DVNECASQPCQNGGTCTHGINSFRCQCPAGFGGPTCE, and AQSPCDTKECQHGGQCQVENGSAVCVCQAGYTGAACE. Cystine bridges form between Cys272–Cys284, Cys278–Cys297, Cys299–Cys308, Cys315–Cys326, Cys320–Cys335, Cys337–Cys346, Cys353–Cys364, Cys358–Cys373, Cys375–Cys384, Cys391–Cys402, Cys396–Cys411, Cys413–Cys422, Cys433–Cys444, Cys438–Cys453, Cys455–Cys464, Cys472–Cys480, Cys474–Cys488, and Cys490–Cys499. A glycan (N-linked (GlcNAc...) asparagine) is linked at Asn292. One can recognise a Follistatin-like 1 domain in the interval 352-374; it reads PCDTKECQHGGQCQVENGSAVCV. Asn368 carries N-linked (GlcNAc...) asparagine glycosylation. An EGF-like 4; calcium-binding domain is found at 387-423; sequence DVDDCSPDPCLNGGSCVDLVGNYTCLCAEPFKGLRCE. An N-linked (GlcNAc...) asparagine glycan is attached at Asn408. EGF-like domains are found at residues 429 to 465 and 468 to 500; these read VPDACLSAPCHNGGTCVDADQGYVCECPEGFMGLDCR and VPDDCECRNGGRCLGANTTLCQCPLGFFGLLCE. N-linked (GlcNAc...) asparagine glycosylation occurs at Asn484. One can recognise a Follistatin-like 2 domain in the interval 507–530; that stretch reads PCNMNTQCPDGGYCMEHGGSYLCV. An N-linked (GlcNAc...) asparagine glycan is attached at Asn536. EGF-like domains lie at 541-577, 580-616, 619-655, and 657-693; these read LPSPCDSDPCFNGGSCDAHDDSYTCECPRGFHGKHCE, RPHLCSSGPCRNGGTCKEAGGEYHCSCPYRFTGRHCE, KPDSCASGPCHNGGTCFHYIGKYKCDCPPGFSGRHCE, and APSPCFRSPCVNGGTCEDRDTDFFCHCQAGYMGRRCQ. 26 cysteine pairs are disulfide-bonded: Cys545-Cys556, Cys550-Cys565, Cys567-Cys576, Cys584-Cys595, Cys589-Cys604, Cys606-Cys615, Cys623-Cys634, Cys628-Cys643, Cys645-Cys654, Cys661-Cys672, Cys666-Cys681, Cys683-Cys692, Cys698-Cys739, Cys724-Cys751, Cys757-Cys768, Cys762-Cys777, Cys779-Cys788, Cys795-Cys806, Cys800-Cys815, Cys817-Cys826, Cys833-Cys844, Cys838-Cys853, Cys855-Cys864, Cys871-Cys882, Cys876-Cys891, and Cys893-Cys902. The region spanning 696–753 is the Sushi domain; the sequence is VDCGPPEEVKHATLRFNGTRLGAVALYACDRGYSLSAPSRIRVCQPHGVWSEPPQCLE. The N-linked (GlcNAc...) asparagine glycan is linked to Asn712. The EGF-like 11; calcium-binding domain occupies 753–789; that stretch reads EIDECRSQPCLHGGSCQDRVAGYLCLCSTGYEGAHCE. Residues 791–827 form the EGF-like 12; calcium-binding domain; sequence ERDECRAHPCRNGGSCRNLPGAYVCRCPAGFVGVHCE. EGF-like domains are found at residues 829–865 and 867–903; these read EVDACDSSPCQHGGRCESGGGAYLCVCPESFFGYHCE and VSDPCFSSPCGGRGYCLASNGSHSCTCKVGYTGEDCA. Residue Asn886 is glycosylated (N-linked (GlcNAc...) asparagine). Fibronectin type-III domains follow at residues 908–1006, 1007–1105, and 1106–1200; these read PPTA…TRPR, PVEG…TRPL, and PPAN…SPRD. N-linked (GlcNAc...) asparagine glycosylation is found at Asn977, Asn1015, Asn1109, and Asn1139. A disordered region spans residues 1206–1226; that stretch reads WHQGGHHPRVLKNRPPPARLP. A compositionally biased stretch (basic residues) spans 1207 to 1217; sequence HQGGHHPRVLK. Residues 1307-1343 form the EGF-like 15 domain; the sequence is VPGNCSENPCQNGGTCVPGADAHSCDCGPGFKGRRCE. The N-linked (GlcNAc...) asparagine glycan is linked to Asn1310. 3 disulfides stabilise this stretch: Cys1311-Cys1322, Cys1316-Cys1331, and Cys1333-Cys1342. The segment at 1394-1413 is disordered; it reads TSLKKTPNRKQSKSQTLEKS.

Phosphorylated on serine and threonine residues. In terms of processing, N-glycosylated.

The protein localises to the secreted. It is found in the extracellular space. It localises to the extracellular matrix. The polypeptide is Sushi, nidogen and EGF-like domain-containing protein 1 (Homo sapiens (Human)).